The primary structure comprises 171 residues: NADH-quinone oxidoreductase subunit I 2 (171 aa).

4Fe-4S ferredoxin-type domains lie at 39-71 and 81-110; these read IVLTRDPDGQERCVACNLCAVACPVGCIDLSKA and EHFRINFARCIFCGYCEEACPTAAIQLTPD. Positions 51, 54, 57, 61, 90, 93, 96, and 100 each coordinate [4Fe-4S] cluster.

The protein belongs to the complex I 23 kDa subunit family. NDH-1 is composed of 14 different subunits. Subunits NuoA, H, J, K, L, M, N constitute the membrane sector of the complex. The cofactor is [4Fe-4S] cluster.

The protein localises to the cell inner membrane. The catalysed reaction is a quinone + NADH + 5 H(+)(in) = a quinol + NAD(+) + 4 H(+)(out). In terms of biological role, NDH-1 shuttles electrons from NADH, via FMN and iron-sulfur (Fe-S) centers, to quinones in the respiratory chain. The immediate electron acceptor for the enzyme in this species is believed to be ubiquinone. Couples the redox reaction to proton translocation (for every two electrons transferred, four hydrogen ions are translocated across the cytoplasmic membrane), and thus conserves the redox energy in a proton gradient. The protein is NADH-quinone oxidoreductase subunit I 2 of Rhodopseudomonas palustris (strain BisB18).